A 324-amino-acid polypeptide reads, in one-letter code: Phospho-N-acetylmuramoyl-pentapeptide-transferase (324 aa).

A run of 10 helical transmembrane segments spans residues 5-25 (GLLV…PLFI), 52-72 (PTMG…IMAI), 77-97 (LGAE…IGFL), 117-137 (LLGQ…QGFD), 147-167 (ITFD…IGGS), 176-196 (LDGL…IIAV), 202-222 (AVAI…VFNA), 227-247 (VFMG…VAIL), 253-273 (LLVI…IQVI), and 302-322 (VVVT…YIGV).

Belongs to the glycosyltransferase 4 family. MraY subfamily. It depends on Mg(2+) as a cofactor.

It is found in the cell membrane. It catalyses the reaction UDP-N-acetyl-alpha-D-muramoyl-L-alanyl-gamma-D-glutamyl-meso-2,6-diaminopimeloyl-D-alanyl-D-alanine + di-trans,octa-cis-undecaprenyl phosphate = di-trans,octa-cis-undecaprenyl diphospho-N-acetyl-alpha-D-muramoyl-L-alanyl-D-glutamyl-meso-2,6-diaminopimeloyl-D-alanyl-D-alanine + UMP. Its pathway is cell wall biogenesis; peptidoglycan biosynthesis. Functionally, catalyzes the initial step of the lipid cycle reactions in the biosynthesis of the cell wall peptidoglycan: transfers peptidoglycan precursor phospho-MurNAc-pentapeptide from UDP-MurNAc-pentapeptide onto the lipid carrier undecaprenyl phosphate, yielding undecaprenyl-pyrophosphoryl-MurNAc-pentapeptide, known as lipid I. This Bacillus cytotoxicus (strain DSM 22905 / CIP 110041 / 391-98 / NVH 391-98) protein is Phospho-N-acetylmuramoyl-pentapeptide-transferase.